Consider the following 212-residue polypeptide: Nucleoredoxin-like protein 1 (212 aa).

In terms of domain architecture, Thioredoxin spans 1–164 (MASLFSGRIL…AAEVLDRNFQ (164 aa)). The disordered stretch occupies residues 191-212 (AARGGRDPGGGGGEEGGAGGLF). Residues 197–212 (DPGGGGGEEGGAGGLF) show a composition bias toward gly residues.

This sequence belongs to the nucleoredoxin family. As to quaternary structure, interacts with isoform 1 of BSG.

It is found in the cell projection. The protein localises to the cilium. It localises to the photoreceptor outer segment. In terms of biological role, plays an important role in retinal cone photoreceptor survival. In association with glucose transporter SLC16A1/GLUT1 and BSG, promotes retinal cone survival by enhancing aerobic glycolysis and accelerating the entry of glucose into photoreceptors. May play a role in cone cell viability, slowing down cone degeneration, does not seem to play a role in degenerating rods. In Homo sapiens (Human), this protein is Nucleoredoxin-like protein 1 (NXNL1).